The primary structure comprises 159 residues: Lipoprotein signal peptidase (159 aa).

2 helical membrane passes run 59 to 79 (PMIL…YVVF) and 87 to 107 (FLIT…DRIL). Residues aspartate 113 and aspartate 139 contribute to the active site. The helical transmembrane segment at 131-151 (LWPVFNIADSAITIGACVLVI) threads the bilayer.

The protein belongs to the peptidase A8 family.

It is found in the cell inner membrane. It catalyses the reaction Release of signal peptides from bacterial membrane prolipoproteins. Hydrolyzes -Xaa-Yaa-Zaa-|-(S,diacylglyceryl)Cys-, in which Xaa is hydrophobic (preferably Leu), and Yaa (Ala or Ser) and Zaa (Gly or Ala) have small, neutral side chains.. It participates in protein modification; lipoprotein biosynthesis (signal peptide cleavage). In terms of biological role, this protein specifically catalyzes the removal of signal peptides from prolipoproteins. The protein is Lipoprotein signal peptidase of Chlorobium phaeobacteroides (strain BS1).